A 66-amino-acid chain; its full sequence is Large ribosomal subunit protein bL35 (66 aa).

2 stretches are compositionally biased toward basic residues: residues 1–16 (MPKF…RFKR) and 23–45 (KRSH…RQLR). Residues 1-66 (MPKFKTHRAS…RIRQMLSGLK (66 aa)) are disordered.

This sequence belongs to the bacterial ribosomal protein bL35 family.

This chain is Large ribosomal subunit protein bL35, found in Latilactobacillus sakei subsp. sakei (strain 23K) (Lactobacillus sakei subsp. sakei).